A 398-amino-acid polypeptide reads, in one-letter code: UDP-D-apiose/UDP-D-xylose synthase (398 aa).

57-88 (DVYCDKIRHLVDPAPPHLHGRISFHRLNIKND) contributes to the NAD(+) binding site. Substrate is bound at residue R190. The Proton acceptor role is filled by Y193. 193-197 (YACAK) is an NAD(+) binding site. A substrate-binding site is contributed by N222. An NAD(+)-binding site is contributed by R243. Residues 244 to 248 (VLACF), 261 to 268 (VDGGQSQR), and 345 to 349 (DSDKR) each bind substrate.

Belongs to the NAD(P)-dependent epimerase/dehydratase family. In terms of assembly, homodimer. NAD(+) is required as a cofactor.

It is found in the cytoplasm. Its function is as follows. Catalyzes the conversion of UDP-D-glucuronate to a mixture of UDP-D-apiose and UDP-D-xylose. D-Apiose (3-C-hydroxymethyl-d-erythrose) is the only plant cell wall monosaccharide with a branched carbon skeleton and found in rhamnogalacturonan II (RG-II), apiogalacturonan, and several apioglycosides. The polypeptide is UDP-D-apiose/UDP-D-xylose synthase (Oryza sativa subsp. japonica (Rice)).